The primary structure comprises 397 residues: Riboflavin biosynthesis protein RibBA (397 aa).

Residues 1 to 199 (MFHRIEEALE…IEDLIAYRRH (199 aa)) form a DHBP synthase region. Residues 26-27 (RE), aspartate 31, 138-142 (RAGHT), and glutamate 162 each bind D-ribulose 5-phosphate. Glutamate 27 provides a ligand contact to Mg(2+). Position 141 (histidine 141) interacts with Mg(2+). Residues 200 to 397 (HETLVTREVE…VNKLGHLLNL (198 aa)) form a GTP cyclohydrolase II region. 250-254 (RVHSE) is a GTP binding site. The Zn(2+) site is built by cysteine 255, cysteine 266, and cysteine 268. Residues glutamine 271, 293–295 (EGR), and threonine 315 each bind GTP. Residue aspartate 327 is the Proton acceptor; for GTP cyclohydrolase activity of the active site. Arginine 329 functions as the Nucleophile; for GTP cyclohydrolase activity in the catalytic mechanism. GTP-binding residues include threonine 350 and lysine 355.

It in the N-terminal section; belongs to the DHBP synthase family. In the C-terminal section; belongs to the GTP cyclohydrolase II family. Requires Mg(2+) as cofactor. It depends on Mn(2+) as a cofactor. Zn(2+) is required as a cofactor.

It catalyses the reaction D-ribulose 5-phosphate = (2S)-2-hydroxy-3-oxobutyl phosphate + formate + H(+). The enzyme catalyses GTP + 4 H2O = 2,5-diamino-6-hydroxy-4-(5-phosphoribosylamino)-pyrimidine + formate + 2 phosphate + 3 H(+). It functions in the pathway cofactor biosynthesis; riboflavin biosynthesis; 2-hydroxy-3-oxobutyl phosphate from D-ribulose 5-phosphate: step 1/1. Its pathway is cofactor biosynthesis; riboflavin biosynthesis; 5-amino-6-(D-ribitylamino)uracil from GTP: step 1/4. Functionally, catalyzes the conversion of D-ribulose 5-phosphate to formate and 3,4-dihydroxy-2-butanone 4-phosphate. In terms of biological role, catalyzes the conversion of GTP to 2,5-diamino-6-ribosylamino-4(3H)-pyrimidinone 5'-phosphate (DARP), formate and pyrophosphate. This is Riboflavin biosynthesis protein RibBA from Bacillus cereus (strain ATCC 10987 / NRS 248).